Consider the following 428-residue polypeptide: Serine--tRNA ligase (428 aa).

231-233 is a binding site for L-serine; the sequence is TSE. Residues 262-264 and Val-278 each bind ATP; that span reads RRE. Glu-285 lines the L-serine pocket. 349-352 provides a ligand contact to ATP; that stretch reads ELTS. Thr-384 contributes to the L-serine binding site.

Belongs to the class-II aminoacyl-tRNA synthetase family. Type-1 seryl-tRNA synthetase subfamily. Homodimer. The tRNA molecule binds across the dimer.

It is found in the cytoplasm. The enzyme catalyses tRNA(Ser) + L-serine + ATP = L-seryl-tRNA(Ser) + AMP + diphosphate + H(+). The catalysed reaction is tRNA(Sec) + L-serine + ATP = L-seryl-tRNA(Sec) + AMP + diphosphate + H(+). It participates in aminoacyl-tRNA biosynthesis; selenocysteinyl-tRNA(Sec) biosynthesis; L-seryl-tRNA(Sec) from L-serine and tRNA(Sec): step 1/1. Catalyzes the attachment of serine to tRNA(Ser). Is also able to aminoacylate tRNA(Sec) with serine, to form the misacylated tRNA L-seryl-tRNA(Sec), which will be further converted into selenocysteinyl-tRNA(Sec). In Bifidobacterium longum (strain NCC 2705), this protein is Serine--tRNA ligase.